A 182-amino-acid chain; its full sequence is Large ribosomal subunit protein uL16 (182 aa).

Belongs to the universal ribosomal protein uL16 family.

The polypeptide is Large ribosomal subunit protein uL16 (Thermococcus gammatolerans (strain DSM 15229 / JCM 11827 / EJ3)).